Here is a 141-residue protein sequence, read N- to C-terminus: Hemoglobin subunit alpha (141 aa).

The Globin domain maps to 1–141 (VLSSADKNNV…VSTVLTSKYR (141 aa)). Ser-3 carries the phosphoserine modification. Lys-7 and Lys-11 each carry N6-succinyllysine. N6-acetyllysine; alternate is present on Lys-16. The residue at position 16 (Lys-16) is an N6-succinyllysine; alternate. A Phosphotyrosine modification is found at Tyr-24. Ser-35 carries the phosphoserine modification. Lys-40 carries the post-translational modification N6-succinyllysine. A Phosphoserine modification is found at Ser-49. Position 58 (His-58) interacts with O2. Residue His-87 participates in heme b binding. Ser-102 bears the Phosphoserine mark. Thr-108 carries the post-translational modification Phosphothreonine. At Ser-124 the chain carries Phosphoserine. Residues Thr-134 and Thr-137 each carry the phosphothreonine modification. Ser-138 is subject to Phosphoserine.

This sequence belongs to the globin family. In terms of assembly, heterotetramer of two alpha chains and two beta chains. Red blood cells.

Involved in oxygen transport from the lung to the various peripheral tissues. In terms of biological role, hemopressin acts as an antagonist peptide of the cannabinoid receptor CNR1. Hemopressin-binding efficiently blocks cannabinoid receptor CNR1 and subsequent signaling. The chain is Hemoglobin subunit alpha (HBA) from Panthera pardus saxicolor (Northern Persian leopard).